We begin with the raw amino-acid sequence, 341 residues long: Elongation factor Ts, mitochondrial 2 (341 aa).

A mitochondrion-targeting transit peptide spans Met1–Tyr17.

Belongs to the EF-Ts family.

It localises to the mitochondrion. Functionally, associates with the EF-Tu.GDP complex and induces the exchange of GDP to GTP. It remains bound to the aminoacyl-tRNA.EF-Tu.GTP complex up to the GTP hydrolysis stage on the ribosome. This chain is Elongation factor Ts, mitochondrial 2, found in Postia placenta (strain ATCC 44394 / Madison 698-R) (Brown rot fungus).